The chain runs to 235 residues: Keratin-associated protein 4-16 (235 aa).

Residues 1-132 (MCSSKMPCSP…CCCPCCCLRP (132 aa)) form a 16 X 5 AA repeats of C-C-[GIKRQVHEML]-[SPTRV]-[STVQRCP] region. 16 repeat units span residues 23–27 (CCHPS), 28–32 (CCQTT), 33–37 (CCRTT), 48–52 (CCRPQ), 53–57 (CCHSV), 58–62 (CCQPT), 63–67 (CCRPS), 68–72 (CCQTT), 78–82 (CCHPS), 83–87 (CCVSS), 88–92 (CCRPQ), 93–97 (CCHSV), 103–107 (CCHPS), 108–112 (CCISS), 118–122 (CCESS), and 128–132 (CCLRP). Over residues 203–224 (SPSPSLPSLSPPLPSPPLPSPH) the composition is skewed to pro residues. Positions 203–235 (SPSPSLPSLSPPLPSPPLPSPHFPSVNPKSMLQ) are disordered.

It belongs to the KRTAP type 4 family. Interacts with hair keratins.

Its function is as follows. In the hair cortex, hair keratin intermediate filaments are embedded in an interfilamentous matrix, consisting of hair keratin-associated proteins (KRTAP), which are essential for the formation of a rigid and resistant hair shaft through their extensive disulfide bond cross-linking with abundant cysteine residues of hair keratins. The matrix proteins include the high-sulfur and high-glycine-tyrosine keratins. This is Keratin-associated protein 4-16 from Homo sapiens (Human).